Reading from the N-terminus, the 460-residue chain is Elongation factor 1-alpha (460 aa).

A N,N,N-trimethylglycine modification is found at Gly-2. Residue Lys-3 is modified to N6,N6-dimethyllysine; alternate. An N6-methyllysine; alternate modification is found at Lys-3. Residues 6 to 241 form the tr-type G domain; sequence KTHINLVVIG…DAIDPPTRPT (236 aa). The segment at 15 to 22 is G1; it reads GHVDSGKS. 15-22 lines the GTP pocket; it reads GHVDSGKS. Lys-31 is subject to N6-methyllysine. A G2 region spans residues 71–75; it reads GITID. At Lys-80 the chain carries N6,N6,N6-trimethyllysine. Positions 92 to 95 are G3; sequence DAPG. Residues 92-96 and 154-157 each bind GTP; these read DAPGH and NKMD. The segment at 154–157 is G4; that stretch reads NKMD. The segment at 193–195 is G5; that stretch reads SGF. Residue Lys-317 is modified to N6,N6-dimethyllysine; alternate. Lys-317 is modified (N6-methyllysine; alternate). Lys-391 is modified (N6-methyllysine).

It belongs to the TRAFAC class translation factor GTPase superfamily. Classic translation factor GTPase family. EF-Tu/EF-1A subfamily.

The protein localises to the cytoplasm. Functionally, this protein promotes the GTP-dependent binding of aminoacyl-tRNA to the A-site of ribosomes during protein biosynthesis. This chain is Elongation factor 1-alpha (TEF), found in Coccidioides immitis (strain RS) (Valley fever fungus).